The following is a 318-amino-acid chain: Replication factor C small subunit (318 aa).

Residue 43–50 (GSVGTGKT) coordinates ATP.

Belongs to the activator 1 small subunits family. RfcS subfamily. Heteromultimer composed of small subunits (RfcS) and large subunits (RfcL).

In terms of biological role, part of the RFC clamp loader complex which loads the PCNA sliding clamp onto DNA. The protein is Replication factor C small subunit of Thermoplasma volcanium (strain ATCC 51530 / DSM 4299 / JCM 9571 / NBRC 15438 / GSS1).